We begin with the raw amino-acid sequence, 86 residues long: Anti-adapter protein IraP (86 aa).

Positions 1 to 36 (MKNLIAELLFKLAQKEEESKELCAQVEALEIIVTAM) form a coiled coil.

This sequence belongs to the IraP family. As to quaternary structure, interacts with RssB.

Its subcellular location is the cytoplasm. Inhibits RpoS proteolysis by regulating RssB activity, thereby increasing the stability of the sigma stress factor RpoS especially during phosphate starvation, but also in stationary phase and during nitrogen starvation. Its effect on RpoS stability is due to its interaction with RssB, which probably blocks the interaction of RssB with RpoS, and the consequent delivery of the RssB-RpoS complex to the ClpXP protein degradation pathway. This chain is Anti-adapter protein IraP, found in Escherichia coli O7:K1 (strain IAI39 / ExPEC).